The following is a 383-amino-acid chain: NifS-like protein (383 aa).

Residues 58 to 59 and 184 to 186 each bind pyridoxal 5'-phosphate; these read SE and SLN.

It belongs to the class-V pyridoxal-phosphate-dependent aminotransferase family. NifS/IscS subfamily. Pyridoxal 5'-phosphate is required as a cofactor.

The protein localises to the virion. The sequence is that of NifS-like protein from African swine fever virus (isolate Pig/Kenya/KEN-50/1950) (ASFV).